We begin with the raw amino-acid sequence, 199 residues long: A-type ATP synthase subunit E (199 aa).

It belongs to the V-ATPase E subunit family. Has multiple subunits with at least A(3), B(3), C, D, E, F, H, I and proteolipid K(x).

It is found in the cell membrane. Its function is as follows. Component of the A-type ATP synthase that produces ATP from ADP in the presence of a proton gradient across the membrane. The sequence is that of A-type ATP synthase subunit E from Pyrococcus abyssi (strain GE5 / Orsay).